The following is a 758-amino-acid chain: MNGNNNTGNLQQSHGPPQQQQQQQMFNQTPQMGFQQAPPPGMQGRGNNAQTPLQQQRFNMSQQQMMAAQQQQQQQQLQQQNAMAAAAAAAAASGRPVPQRNPNYNGSPNPGQTLPLNNNNNNSNNNNNKTGMYNPNALATGMPSSNLQPTSSAGNSRGHTPRMVNQPQPFIPHQQNQPPLPPQQQQQQQQQQQQPTPQLPPQGQTPQQVQMGYPKKVNNGNLVANQSLKSGPMGGPVPMGGPQQARIPPNSSFQQSPQTQFAMPPNSNGPINPQQQQQQHGPNQNPQPTVSGRSPIQRQMIIATTTATGGKGDTNNSVQEQVQQEINTRIIKRNLGNAAIIRVLDLIEFISNQHYENLSNIEFWTKITPANFLPTAILKFNTTNITGGNGNKSLNDITGLNLNFLNSNKATSNNNNNNTNTNTNNSNNNNKPHQFELTTSTAPRFFASCIQTESILKCNISLSGSKFQVLSNGSIVIVSKIGLHFHYKDGSNSALHGTIKILMSKDLRIEWVDLNFSDYQSNISVSALEEKLKSIITDNTSITKKDIKRQKELLDELVKNSQASKLQLTFGIEPQSLRILQLGDVMSSMKSLMEFSMVNNIPSPMKSMELLIASQKNQQMQAFQAQMAVQAQAQAQAQVQAQAQGQNLANFSGSTNLQTDAQRSRQQQQQQQQQQQQQQQQQSLNTSNNNSNSNNSNNNNNNNSNNNNNNNNNNNGKGGIANGSNNISSPSPRTVNAEEPKRKRKQSVNMSNENKRRK.

The span at 1–10 (MNGNNNTGNL) shows a compositional bias: polar residues. 4 disordered regions span residues 1–49 (MNGN…GNNA), 87–293 (AAAA…VSGR), 408–433 (NKAT…NKPH), and 650–758 (NFSG…KRRK). The span at 11–31 (QQSHGPPQQQQQQQMFNQTPQ) shows a compositional bias: low complexity. The span at 100–116 (RNPNYNGSPNPGQTLPL) shows a compositional bias: polar residues. Residues 117-128 (NNNNNNSNNNNN) show a composition bias toward low complexity. A compositionally biased stretch (polar residues) spans 142-168 (MPSSNLQPTSSAGNSRGHTPRMVNQPQ). The span at 183–210 (QQQQQQQQQQQQPTPQLPPQGQTPQQVQ) shows a compositional bias: low complexity. Polar residues-rich tracts occupy residues 218 to 229 (NNGNLVANQSLK) and 249 to 261 (PNSS…QTQF). Low complexity-rich tracts occupy residues 264–288 (PPNS…NPQP) and 408–430 (NKAT…NNNN). Positions 650–665 (NFSGSTNLQTDAQRSR) are enriched in polar residues. Residues 666–715 (QQQQQQQQQQQQQQQQQSLNTSNNNSNSNNSNNNNNNNSNNNNNNNNNNN) are compositionally biased toward low complexity. Positions 722–734 (NGSNNISSPSPRT) are enriched in polar residues.

It belongs to the MFG1 family. As to quaternary structure, interacts with FLO8 and MSS11, both morphogenetic transcription factors binding directly to the FLO11 promoter.

Its subcellular location is the nucleus. In terms of biological role, transcriptional regulator with a general role in all morphogenetically distinct forms of filamentous growth, namely invasive growth and biofilm formation. May control FLO11 gene expression as part of a promoter-bound complex with FLO8 and MSS1. Important for virulence. The chain is Morphogenetic regulator of filamentous growth protein 1 (MFG1) from Candida albicans (strain SC5314 / ATCC MYA-2876) (Yeast).